A 351-amino-acid chain; its full sequence is Protein-glutamate methylesterase/protein-glutamine glutaminase 2 (351 aa).

The Response regulatory domain maps to 5–122 (RVICVDDSAL…RDGLLDYSEL (118 aa)). Residue Asp-56 is modified to 4-aspartylphosphate. Positions 154–341 (LNSSEKLVIL…PLPAMSERIL (188 aa)) constitute a CheB-type methylesterase domain. Catalysis depends on residues Ser-166, His-192, and Asp-289.

This sequence belongs to the CheB family. Phosphorylated by CheA. Phosphorylation of the N-terminal regulatory domain activates the methylesterase activity.

It localises to the cytoplasm. It catalyses the reaction [protein]-L-glutamate 5-O-methyl ester + H2O = L-glutamyl-[protein] + methanol + H(+). The enzyme catalyses L-glutaminyl-[protein] + H2O = L-glutamyl-[protein] + NH4(+). Functionally, involved in chemotaxis. Part of a chemotaxis signal transduction system that modulates chemotaxis in response to various stimuli. Catalyzes the demethylation of specific methylglutamate residues introduced into the chemoreceptors (methyl-accepting chemotaxis proteins or MCP) by CheR. Also mediates the irreversible deamidation of specific glutamine residues to glutamic acid. This is Protein-glutamate methylesterase/protein-glutamine glutaminase 2 from Bordetella avium (strain 197N).